Consider the following 422-residue polypeptide: L-threonine dehydratase biosynthetic IlvA (422 aa).

N6-(pyridoxal phosphate)lysine is present on lysine 56. Residues asparagine 83, 189-193 (GGGGL), and serine 315 each bind pyridoxal 5'-phosphate. The region spanning 339-413 (HYFILNFPQR…FDPSNIYINE (75 aa)) is the ACT-like domain.

Belongs to the serine/threonine dehydratase family. In terms of assembly, homotetramer. It depends on pyridoxal 5'-phosphate as a cofactor.

It catalyses the reaction L-threonine = 2-oxobutanoate + NH4(+). The protein operates within amino-acid biosynthesis; L-isoleucine biosynthesis; 2-oxobutanoate from L-threonine: step 1/1. Functionally, catalyzes the anaerobic formation of alpha-ketobutyrate and ammonia from threonine in a two-step reaction. The first step involved a dehydration of threonine and a production of enamine intermediates (aminocrotonate), which tautomerizes to its imine form (iminobutyrate). Both intermediates are unstable and short-lived. The second step is the nonenzymatic hydrolysis of the enamine/imine intermediates to form 2-ketobutyrate and free ammonia. In the low water environment of the cell, the second step is accelerated by RidA. This chain is L-threonine dehydratase biosynthetic IlvA (ilvA), found in Staphylococcus aureus (strain MSSA476).